The primary structure comprises 173 residues: MLKIFTTQLTGIFSRIQDKESDAIEDGARLLAQAVISGHSIYLYGANELQGVFYEATESKEPFPSVKAFPENAEEVTESDRVLMFCSGTGTAEEQELAKELYEKGAGVVCVSPAAKDSAGIEQYCDVHIDSKLKMPLVPDEDGTRYGFPSLMTALYVYHALSFTLKEILQEYA.

This is an uncharacterized protein from Bacillus subtilis (strain 168).